The primary structure comprises 395 residues: Torsin-3A (395 aa).

The first 24 residues, 1-24 (MFFGAFWLLLLLLLPPLRPPGAQG), serve as a signal peptide directing secretion. Residue asparagine 120 is glycosylated (N-linked (GlcNAc...) asparagine). Position 165-172 (165-172 (GWSGTGKN)) interacts with ATP.

Belongs to the ClpA/ClpB family. Torsin subfamily. May not form homohexamers. N-glycosylated.

It localises to the cytoplasm. The protein resides in the endoplasmic reticulum lumen. This Rattus norvegicus (Rat) protein is Torsin-3A (Tor3a).